A 286-amino-acid polypeptide reads, in one-letter code: 4-diphosphocytidyl-2-C-methyl-D-erythritol kinase (286 aa).

Residue lysine 13 is part of the active site. An ATP-binding site is contributed by proline 101–serine 111. Residue aspartate 143 is part of the active site.

It belongs to the GHMP kinase family. IspE subfamily.

The enzyme catalyses 4-CDP-2-C-methyl-D-erythritol + ATP = 4-CDP-2-C-methyl-D-erythritol 2-phosphate + ADP + H(+). It functions in the pathway isoprenoid biosynthesis; isopentenyl diphosphate biosynthesis via DXP pathway; isopentenyl diphosphate from 1-deoxy-D-xylulose 5-phosphate: step 3/6. Functionally, catalyzes the phosphorylation of the position 2 hydroxy group of 4-diphosphocytidyl-2C-methyl-D-erythritol. This is 4-diphosphocytidyl-2-C-methyl-D-erythritol kinase from Idiomarina loihiensis (strain ATCC BAA-735 / DSM 15497 / L2-TR).